The sequence spans 270 residues: Aquaporin-11 (270 aa).

2 helical membrane passes run 5-25 (IMTMYPLLISILHILFIISIC) and 59-79 (FELGVITQIYGFSAYALGLFF). An NPA 1 motif is present at residues 94-96 (DPS). The chain crosses the membrane as a helical span at residues 120-140 (IMGAAVSYRFAKIFWSFGLMA). Asparagine 148 carries N-linked (GlcNAc...) asparagine glycosylation. The next 2 membrane-spanning stretches (helical) occupy residues 153–173 (ASLQVPVLIGLGFETFETIVN) and 184–204 (MLISAISDVCITFFGLFVSGG). The NPA 2 motif lies at 207–209 (NPT). The helical transmembrane segment at 220 to 240 (GLSGPSFFLVYWFGPILGSSI) threads the bilayer.

It belongs to the MIP/aquaporin (TC 1.A.8) family.

The protein resides in the membrane. It carries out the reaction H2O(in) = H2O(out). Its function is as follows. Probable intracellular unorthodox aquaporin that may modulate the water content and osmolytes during anhydrobiosis. The polypeptide is Aquaporin-11 (Milnesium tardigradum (Water bear)).